A 209-amino-acid polypeptide reads, in one-letter code: ATP-dependent Clp protease proteolytic subunit 1 (209 aa).

Residue S109 is the Nucleophile of the active site. Residue H134 is part of the active site.

The protein belongs to the peptidase S14 family. Fourteen ClpP subunits assemble into 2 heptameric rings which stack back to back to give a disk-like structure with a central cavity, resembling the structure of eukaryotic proteasomes.

The protein resides in the cytoplasm. The enzyme catalyses Hydrolysis of proteins to small peptides in the presence of ATP and magnesium. alpha-casein is the usual test substrate. In the absence of ATP, only oligopeptides shorter than five residues are hydrolyzed (such as succinyl-Leu-Tyr-|-NHMec, and Leu-Tyr-Leu-|-Tyr-Trp, in which cleavage of the -Tyr-|-Leu- and -Tyr-|-Trp bonds also occurs).. Cleaves peptides in various proteins in a process that requires ATP hydrolysis. Has a chymotrypsin-like activity. Plays a major role in the degradation of misfolded proteins. This chain is ATP-dependent Clp protease proteolytic subunit 1, found in Corynebacterium diphtheriae (strain ATCC 700971 / NCTC 13129 / Biotype gravis).